A 667-amino-acid polypeptide reads, in one-letter code: Acetoacetyl-CoA synthetase (667 aa).

It belongs to the ATP-dependent AMP-binding enzyme family.

It localises to the cytoplasm. It is found in the cytosol. It catalyses the reaction acetoacetate + ATP + CoA = acetoacetyl-CoA + AMP + diphosphate. Functionally, converts acetoacetate to acetoacetyl-CoA in the cytosol. Ketone body-utilizing enzyme, responsible for the synthesis of cholesterol and fatty acids. In Gallus gallus (Chicken), this protein is Acetoacetyl-CoA synthetase (AACS).